A 401-amino-acid chain; its full sequence is Tyrosine--tRNA ligase (401 aa).

Residues 43-52 (PTAPDLHLGH) carry the 'HIGH' region motif. The 'KMSKS' region signature appears at 227–231 (KMSKS). Residue lysine 230 participates in ATP binding. An S4 RNA-binding domain is found at 338 to 399 (MAIGNVLKEA…GKRRFAKINL (62 aa)).

It belongs to the class-I aminoacyl-tRNA synthetase family. TyrS type 2 subfamily. As to quaternary structure, homodimer.

It is found in the cytoplasm. The catalysed reaction is tRNA(Tyr) + L-tyrosine + ATP = L-tyrosyl-tRNA(Tyr) + AMP + diphosphate + H(+). Catalyzes the attachment of tyrosine to tRNA(Tyr) in a two-step reaction: tyrosine is first activated by ATP to form Tyr-AMP and then transferred to the acceptor end of tRNA(Tyr). The protein is Tyrosine--tRNA ligase of Idiomarina loihiensis (strain ATCC BAA-735 / DSM 15497 / L2-TR).